The primary structure comprises 394 residues: Chaperone protein DnaJ (394 aa).

The J domain occupies 6–71 (DYYEVLEVTK…DKRARYDQFG (66 aa)). The CR-type zinc-finger motif lies at 152–234 (GVEKKFKLKK…CGGEGIEYGE (83 aa)). 8 residues coordinate Zn(2+): C165, C168, C182, C185, C208, C211, C222, and C225. CXXCXGXG motif repeat units follow at residues 165-172 (CSHCHGTG), 182-189 (CPTCKGSG), 208-215 (CPTCNGEG), and 222-229 (CKVCGGEG).

It belongs to the DnaJ family. In terms of assembly, homodimer. It depends on Zn(2+) as a cofactor.

It is found in the cytoplasm. Its function is as follows. Participates actively in the response to hyperosmotic and heat shock by preventing the aggregation of stress-denatured proteins and by disaggregating proteins, also in an autonomous, DnaK-independent fashion. Unfolded proteins bind initially to DnaJ; upon interaction with the DnaJ-bound protein, DnaK hydrolyzes its bound ATP, resulting in the formation of a stable complex. GrpE releases ADP from DnaK; ATP binding to DnaK triggers the release of the substrate protein, thus completing the reaction cycle. Several rounds of ATP-dependent interactions between DnaJ, DnaK and GrpE are required for fully efficient folding. Also involved, together with DnaK and GrpE, in the DNA replication of plasmids through activation of initiation proteins. This is Chaperone protein DnaJ from Bacteroides fragilis (strain YCH46).